The following is a 354-amino-acid chain: UDP-N-acetylglucosamine--N-acetylmuramyl-(pentapeptide) pyrophosphoryl-undecaprenol N-acetylglucosamine transferase (354 aa).

Residues 13 to 15 (SGG), Asn-125, Ser-189, Ile-242, 261 to 266 (ALTVSE), and Gln-286 contribute to the UDP-N-acetyl-alpha-D-glucosamine site.

The protein belongs to the glycosyltransferase 28 family. MurG subfamily.

It localises to the cell inner membrane. It carries out the reaction di-trans,octa-cis-undecaprenyl diphospho-N-acetyl-alpha-D-muramoyl-L-alanyl-D-glutamyl-meso-2,6-diaminopimeloyl-D-alanyl-D-alanine + UDP-N-acetyl-alpha-D-glucosamine = di-trans,octa-cis-undecaprenyl diphospho-[N-acetyl-alpha-D-glucosaminyl-(1-&gt;4)]-N-acetyl-alpha-D-muramoyl-L-alanyl-D-glutamyl-meso-2,6-diaminopimeloyl-D-alanyl-D-alanine + UDP + H(+). Its pathway is cell wall biogenesis; peptidoglycan biosynthesis. Functionally, cell wall formation. Catalyzes the transfer of a GlcNAc subunit on undecaprenyl-pyrophosphoryl-MurNAc-pentapeptide (lipid intermediate I) to form undecaprenyl-pyrophosphoryl-MurNAc-(pentapeptide)GlcNAc (lipid intermediate II). This Buchnera aphidicola subsp. Acyrthosiphon pisum (strain 5A) protein is UDP-N-acetylglucosamine--N-acetylmuramyl-(pentapeptide) pyrophosphoryl-undecaprenol N-acetylglucosamine transferase.